The following is a 475-amino-acid chain: Lactate utilization protein B (475 aa).

4Fe-4S ferredoxin-type domains follow at residues 304–334 (GTEFQAALHCIRCAACINVCPVYRHVGGHSY) and 353–382 (YEDHKELPYASSLCAACTDACPVKIPLHEL). 7 residues coordinate [4Fe-4S] cluster: C313, C316, C319, C323, C366, C369, and C373.

It belongs to the LutB/YkgF family.

Its function is as follows. Is involved in L-lactate degradation and allows cells to grow with lactate as the sole carbon source. Has probably a role as an electron transporter during oxidation of L-lactate. The protein is Lactate utilization protein B of Shouchella clausii (strain KSM-K16) (Alkalihalobacillus clausii).